The primary structure comprises 384 residues: Dual-specificity RNA methyltransferase RlmN (384 aa).

The active-site Proton acceptor is the Glu-105. The 240-residue stretch at 111–350 (EDDRATLCVS…TIVRKTRGDD (240 aa)) folds into the Radical SAM core domain. A disulfide bond links Cys-118 and Cys-355. 3 residues coordinate [4Fe-4S] cluster: Cys-125, Cys-129, and Cys-132. S-adenosyl-L-methionine contacts are provided by residues 179 to 180 (GE), Ser-211, 233 to 235 (SLH), and Asn-312. The active-site S-methylcysteine intermediate is the Cys-355.

Belongs to the radical SAM superfamily. RlmN family. Requires [4Fe-4S] cluster as cofactor.

The protein localises to the cytoplasm. It catalyses the reaction adenosine(2503) in 23S rRNA + 2 reduced [2Fe-2S]-[ferredoxin] + 2 S-adenosyl-L-methionine = 2-methyladenosine(2503) in 23S rRNA + 5'-deoxyadenosine + L-methionine + 2 oxidized [2Fe-2S]-[ferredoxin] + S-adenosyl-L-homocysteine. The catalysed reaction is adenosine(37) in tRNA + 2 reduced [2Fe-2S]-[ferredoxin] + 2 S-adenosyl-L-methionine = 2-methyladenosine(37) in tRNA + 5'-deoxyadenosine + L-methionine + 2 oxidized [2Fe-2S]-[ferredoxin] + S-adenosyl-L-homocysteine. Specifically methylates position 2 of adenine 2503 in 23S rRNA and position 2 of adenine 37 in tRNAs. m2A2503 modification seems to play a crucial role in the proofreading step occurring at the peptidyl transferase center and thus would serve to optimize ribosomal fidelity. This is Dual-specificity RNA methyltransferase RlmN from Escherichia coli O17:K52:H18 (strain UMN026 / ExPEC).